The primary structure comprises 303 residues: Probable 5-dehydro-4-deoxyglucarate dehydratase (303 aa).

It belongs to the DapA family.

The enzyme catalyses 5-dehydro-4-deoxy-D-glucarate + H(+) = 2,5-dioxopentanoate + CO2 + H2O. The protein operates within carbohydrate acid metabolism; D-glucarate degradation; 2,5-dioxopentanoate from D-glucarate: step 2/2. In Pseudomonas syringae pv. syringae (strain B728a), this protein is Probable 5-dehydro-4-deoxyglucarate dehydratase.